We begin with the raw amino-acid sequence, 461 residues long: Porin AaxA (461 aa).

The first 22 residues, 1-22 (MSFRSVLLTALLSLSFTTTMQA), serve as a signal peptide directing secretion.

This sequence belongs to the OprB family.

The protein resides in the cell outer membrane. Functionally, facilitates L-arginine uptake, as part of the AaxABC system. The arginine uptake by the bacterium in the macrophage may be a virulence factor against the host innate immune response. The chain is Porin AaxA (aaxA) from Chlamydia trachomatis serovar L2 (strain ATCC VR-902B / DSM 19102 / 434/Bu).